Here is a 77-residue protein sequence, read N- to C-terminus: UPF0291 protein RBAM_017680 (77 aa).

The segment at 55–77 is disordered; it reads IDPEGNDVTPEKLKREQQKNNLH. Positions 63 to 77 are enriched in basic and acidic residues; that stretch reads TPEKLKREQQKNNLH.

Belongs to the UPF0291 family.

The protein localises to the cytoplasm. This chain is UPF0291 protein RBAM_017680, found in Bacillus velezensis (strain DSM 23117 / BGSC 10A6 / LMG 26770 / FZB42) (Bacillus amyloliquefaciens subsp. plantarum).